The following is a 331-amino-acid chain: Biotin synthase (331 aa).

Residues 51-278 enclose the Radical SAM core domain; that stretch reads QTIQLSTLMS…KSYVRLSAGR (228 aa). Positions 66, 70, and 73 each coordinate [4Fe-4S] cluster. The [2Fe-2S] cluster site is built by C110, C141, C201, and R273.

Belongs to the radical SAM superfamily. Biotin synthase family. Homodimer. The cofactor is [4Fe-4S] cluster. [2Fe-2S] cluster is required as a cofactor.

It catalyses the reaction (4R,5S)-dethiobiotin + (sulfur carrier)-SH + 2 reduced [2Fe-2S]-[ferredoxin] + 2 S-adenosyl-L-methionine = (sulfur carrier)-H + biotin + 2 5'-deoxyadenosine + 2 L-methionine + 2 oxidized [2Fe-2S]-[ferredoxin]. It participates in cofactor biosynthesis; biotin biosynthesis; biotin from 7,8-diaminononanoate: step 2/2. Its function is as follows. Catalyzes the conversion of dethiobiotin (DTB) to biotin by the insertion of a sulfur atom into dethiobiotin via a radical-based mechanism. The sequence is that of Biotin synthase from Histophilus somni (strain 129Pt) (Haemophilus somnus).